Reading from the N-terminus, the 277-residue chain is Undecaprenyl-diphosphatase 2 (277 aa).

The next 6 membrane-spanning stretches (helical) occupy residues arginine 43–phenylalanine 63, leucine 87–glutamate 107, leucine 109–alanine 129, alanine 183–serine 203, serine 214–valine 234, and isoleucine 254–alanine 274.

This sequence belongs to the UppP family.

It is found in the cell inner membrane. It catalyses the reaction di-trans,octa-cis-undecaprenyl diphosphate + H2O = di-trans,octa-cis-undecaprenyl phosphate + phosphate + H(+). Catalyzes the dephosphorylation of undecaprenyl diphosphate (UPP). Confers resistance to bacitracin. This Pseudomonas fluorescens (strain Pf0-1) protein is Undecaprenyl-diphosphatase 2.